The sequence spans 350 residues: Core protein VP7 (350 aa).

N45 carries N-linked (GlcNAc...) asparagine; by host glycosylation.

The protein belongs to the orbivirus VP7 family. As to quaternary structure, homotrimer.

The protein localises to the virion. In terms of biological role, major structural core protein; binds to structural protein VP3. Constitutes the surface of the AHSV core. This is Core protein VP7 (Segment-7) from African horse sickness virus (AHSV).